The sequence spans 617 residues: Arrestin domain-containing protein B (617 aa).

In terms of domain architecture, C2 spans 1-109; sequence MDNRGLRLFI…ATFGQTDKWL (109 aa). 5 residues coordinate Ca(2+): D20, D27, D76, D78, and D84.

It belongs to the arrestin family. Requires Ca(2+) as cofactor.

This chain is Arrestin domain-containing protein B (adcB), found in Dictyostelium discoideum (Social amoeba).